The chain runs to 122 residues: MLVIFLGILGLMASQVLGLPSNQPTGQLRPTEDPPEEELEYWCAYMESCQFCWDCQDGNCINKIDGSVIYKNEFVRPCSVSRWMDKCMYDLNKGIYHTMNCSQPQSWNPYKYFRKEWKKDEL.

A signal peptide spans 1-18 (MLVIFLGILGLMASQVLG). An N-linked (GlcNAc...) asparagine; by host glycan is attached at asparagine 100. The short motif at 119 to 122 (KDEL) is the Prevents secretion from ER element.

This sequence belongs to the asfivirus MGF 110 family. Post-translationally, N-glycosylated.

It is found in the host endoplasmic reticulum lumen. Functionally, plays a role in virus cell tropism, and may be required for efficient virus replication in macrophages. This is Protein MGF 110-6L from Ornithodoros (relapsing fever ticks).